We begin with the raw amino-acid sequence, 388 residues long: Probable RNA-binding protein sce3 (388 aa).

Residues 18–84 (ESFGSTNWAD…GGMGSGYQRD (67 aa)) form a disordered region. The segment covering 38–50 (DRTTSTYRATPSS) has biased composition (polar residues). Residues serine 49, serine 50, and serine 60 each carry the phosphoserine modification. Threonine 61 is subject to Phosphothreonine. Phosphoserine is present on residues serine 64, serine 67, and serine 71. Residues 94 to 169 (FTAHVGNLSF…RPVRITVAEP (76 aa)) enclose the RRM domain. The span at 171-185 (RSFAREERSTGDWVR) shows a compositional bias: basic and acidic residues. The tract at residues 171–388 (RSFAREERST…WTKIGKGRKH (218 aa)) is disordered. Serine 197 bears the Phosphoserine mark. A compositionally biased stretch (basic and acidic residues) spans 208-229 (RFRDPARDPSDRVREEPREWVR). Residues 248–257 (PRSSSNVNTE) are compositionally biased toward polar residues. 3 positions are modified to phosphoserine: serine 250, serine 251, and serine 252. The segment covering 258-268 (ATPSATTTTSS) has biased composition (low complexity). Residues 289–349 (RVEEKLAKRT…LGDGEKKSSE (61 aa)) show a composition bias toward basic and acidic residues. Serine 347 bears the Phosphoserine mark.

The protein resides in the cytoplasm. This is Probable RNA-binding protein sce3 (sce3) from Schizosaccharomyces pombe (strain 972 / ATCC 24843) (Fission yeast).